A 245-amino-acid chain; its full sequence is Biosynthetic peptidoglycan transglycosylase (245 aa).

A helical membrane pass occupies residues 20–42; that stretch reads VYAGSVFAGAWLATQLFYLAQIA.

It belongs to the glycosyltransferase 51 family.

It is found in the cell inner membrane. It catalyses the reaction [GlcNAc-(1-&gt;4)-Mur2Ac(oyl-L-Ala-gamma-D-Glu-L-Lys-D-Ala-D-Ala)](n)-di-trans,octa-cis-undecaprenyl diphosphate + beta-D-GlcNAc-(1-&gt;4)-Mur2Ac(oyl-L-Ala-gamma-D-Glu-L-Lys-D-Ala-D-Ala)-di-trans,octa-cis-undecaprenyl diphosphate = [GlcNAc-(1-&gt;4)-Mur2Ac(oyl-L-Ala-gamma-D-Glu-L-Lys-D-Ala-D-Ala)](n+1)-di-trans,octa-cis-undecaprenyl diphosphate + di-trans,octa-cis-undecaprenyl diphosphate + H(+). Its pathway is cell wall biogenesis; peptidoglycan biosynthesis. Functionally, peptidoglycan polymerase that catalyzes glycan chain elongation from lipid-linked precursors. The sequence is that of Biosynthetic peptidoglycan transglycosylase from Burkholderia cenocepacia (strain HI2424).